The primary structure comprises 303 residues: D-alanine--D-alanine ligase (303 aa).

Residues 104-300 (KLLWNAVGLP…FERLVERVLE (197 aa)) form the ATP-grasp domain. An ATP-binding site is contributed by 132 to 187 (IAKLGLPLFVKPASEGSSVGVSKVKTAEQLLPAIEEALKYDSIVLVEENLAGAEYS). Positions 254, 267, and 269 each coordinate Mg(2+).

This sequence belongs to the D-alanine--D-alanine ligase family. Requires Mg(2+) as cofactor. Mn(2+) is required as a cofactor.

Its subcellular location is the cytoplasm. The enzyme catalyses 2 D-alanine + ATP = D-alanyl-D-alanine + ADP + phosphate + H(+). It functions in the pathway cell wall biogenesis; peptidoglycan biosynthesis. Functionally, cell wall formation. The sequence is that of D-alanine--D-alanine ligase from Glaesserella parasuis serovar 5 (strain SH0165) (Haemophilus parasuis).